The primary structure comprises 150 residues: 3-hydroxyacyl-[acyl-carrier-protein] dehydratase FabZ (150 aa).

H52 is an active-site residue.

Belongs to the thioester dehydratase family. FabZ subfamily.

It localises to the cytoplasm. The enzyme catalyses a (3R)-hydroxyacyl-[ACP] = a (2E)-enoyl-[ACP] + H2O. Its function is as follows. Involved in unsaturated fatty acids biosynthesis. Catalyzes the dehydration of short chain beta-hydroxyacyl-ACPs and long chain saturated and unsaturated beta-hydroxyacyl-ACPs. The sequence is that of 3-hydroxyacyl-[acyl-carrier-protein] dehydratase FabZ from Albidiferax ferrireducens (strain ATCC BAA-621 / DSM 15236 / T118) (Rhodoferax ferrireducens).